Consider the following 372-residue polypeptide: Putative actin-27 (372 aa).

It belongs to the actin family.

The protein resides in the cytoplasm. Its subcellular location is the cytoskeleton. The catalysed reaction is ATP + H2O = ADP + phosphate + H(+). Functionally, actins are highly conserved proteins that are involved in various types of cell motility and are ubiquitously expressed in all eukaryotic cells. Multiple isoforms are involved in various cellular functions such as cytoskeleton structure, cell mobility, chromosome movement and muscle contraction. The sequence is that of Putative actin-27 (act27) from Dictyostelium discoideum (Social amoeba).